We begin with the raw amino-acid sequence, 821 residues long: MTIPGAGFAGPFAVREFPMTANELRAAELRELLNRYGHEYYVLDAPTVPDAEYDRLFRELQALEEAHPELAVSDSPTRRVGGAPLDEFVSVVHAVPMLSLSNAFSDMQLTDPAERHSELIQFDERVRKGLDAAEVEYATEPKFDGLAISLLYENGVLTRAATRGDGVAGEQVTENVRTIRAIPLKLDGANPPALLEVRGEVLMLKRDFERLNADQIARGDKTFANPRNAAAGSLRQLDSRITAQRRLSFFAYSIAQVGGADWPATHAGEMAWLKTLGFPVVMDSLRPVVSGAAGLAGYYEAVLTARAGLPFEIDGVVYKVNRRDQQEALGFVSRAPRWAIAHKFPAEEALTCVEAIEEQVGRTGAITPVARLKPVFVGGVTVTNATLHNEDEVRRKDVRVGDTVVVRRAGDVIPEVVSVVLAQRPMQPAEGGDLFSAGEEPRYPAYRLPTACPVCGSHVVREEGEAIARCSGGLSCRAQRSQAIQHFAGRRMMDIDGLGERYIDKLVEYGYVQGVADLYRLKLEDLLEMKRRADEDEGVTPETVKAGKVASKWAENLIEAIDASRAPPLARLLFALGIRHVGESTAKTLADWLGTMALIRRCPAALFAALPDIGGVVADSLADFFAEDNNEKALDALLAEVKPADEHAPSPKLRERLDDASLLARLAIPRLTEVRSQQLAAQRSLAWLGQSERRALLALELPAEVVNALADWLDEPGRRAALASLAGLRDEILASLPAAAEAAALPLEGKTLVLTGTLPTLSRDQAKALIEAAGGKVSGSVSKKTHYVVAGEEAGGKLAKAQELGVAILDEAGLQALLAGN.

NAD(+)-binding positions include 50–54 (DAEYD), 99–100 (SL), and E140. K142 (N6-AMP-lysine intermediate) is an active-site residue. NAD(+) is bound by residues R163, E200, K319, and K343. Zn(2+) is bound by residues C452, C455, C470, and C476. The BRCT domain occupies 742-821 (AAALPLEGKT…AGLQALLAGN (80 aa)).

The protein belongs to the NAD-dependent DNA ligase family. LigA subfamily. Mg(2+) serves as cofactor. Mn(2+) is required as a cofactor.

It catalyses the reaction NAD(+) + (deoxyribonucleotide)n-3'-hydroxyl + 5'-phospho-(deoxyribonucleotide)m = (deoxyribonucleotide)n+m + AMP + beta-nicotinamide D-nucleotide.. In terms of biological role, DNA ligase that catalyzes the formation of phosphodiester linkages between 5'-phosphoryl and 3'-hydroxyl groups in double-stranded DNA using NAD as a coenzyme and as the energy source for the reaction. It is essential for DNA replication and repair of damaged DNA. The polypeptide is DNA ligase (Chromobacterium violaceum (strain ATCC 12472 / DSM 30191 / JCM 1249 / CCUG 213 / NBRC 12614 / NCIMB 9131 / NCTC 9757 / MK)).